The primary structure comprises 429 residues: Glucan 1,3-beta-glucosidase (429 aa).

Positions 1 to 19 (MLSMQVVSLISLLVSVCLA) are cleaved as a signal peptide. The propeptide occupies 20–27 (QPLPLSKR). Residue Glu215 is the Proton donor of the active site. 2 disulfides stabilise this stretch: Cys299/Cys425 and Cys324/Cys354. Glu316 (nucleophile) is an active-site residue.

Belongs to the glycosyl hydrolase 5 (cellulase A) family.

The protein resides in the secreted. It carries out the reaction Successive hydrolysis of beta-D-glucose units from the non-reducing ends of (1-&gt;3)-beta-D-glucans, releasing alpha-glucose.. Beta-glucanases participate in the metabolism of beta-glucan, the main structural component of the cell wall. It could also function biosynthetically as a transglycosylase. In Kluyveromyces lactis (strain ATCC 8585 / CBS 2359 / DSM 70799 / NBRC 1267 / NRRL Y-1140 / WM37) (Yeast), this protein is Glucan 1,3-beta-glucosidase.